A 454-amino-acid polypeptide reads, in one-letter code: MINIGEVIETNDMVEKENLDVRTITLGISLLDCIDSDLAKVNENIYNKITTLAKNLVSTGKEIENNYCIPIVNKRISVTPIALVGGAACKSSEDFVTIAKTLDRAAKEVGVNFIGGYSALVSKGMTKADELLIKSIPQAMLETDLVCSSVNVGSTKTGINMDAVKLIGEMIKETAEVTKHLPVSGCAKFVVFCNAPDDNPFMAGAFHGVTEADAIINVGVSGPGVVKTALEKVRGENFEVLCETIKKTAFKVTRVGQLVAKEASKKLGVPFGIIDLSLAPTPAIGDSVADILCEIGLERAGAPGTTAALALLNDQVKKGGIMASSYVGGLSGAFIPVSEDQGMIDAVNDGALTLEKLEAMTCVCSVGLDMIAIPGDTKATTISGIIADEMAIGMINQKTTACRLLPAIGKDVGDVVEIGGLLGSAPVMPVNRFSCDAFVNRGGRIPAPIHSFKN.

This sequence belongs to the UPF0210 family. In terms of assembly, homodimer.

This Agathobacter rectalis (strain ATCC 33656 / DSM 3377 / JCM 17463 / KCTC 5835 / VPI 0990) (Eubacterium rectale) protein is UPF0210 protein EUBREC_1565.